The sequence spans 206 residues: Large ribosomal subunit protein uL3 (206 aa).

The tract at residues 127–151 (SGGPSSHGSKFHRHLGGTGQATTPA) is disordered.

Belongs to the universal ribosomal protein uL3 family. Part of the 50S ribosomal subunit. Forms a cluster with proteins L14 and L19.

Its function is as follows. One of the primary rRNA binding proteins, it binds directly near the 3'-end of the 23S rRNA, where it nucleates assembly of the 50S subunit. The protein is Large ribosomal subunit protein uL3 of Borreliella burgdorferi (strain ATCC 35210 / DSM 4680 / CIP 102532 / B31) (Borrelia burgdorferi).